The following is a 155-amino-acid chain: Cytochrome c-type biogenesis protein CcmE (155 aa).

Over 1 to 8 (MHPKRKQR) the chain is Cytoplasmic. Residues 9–29 (LILVLFVVLVSSVGVSLTLYA) traverse the membrane as a helical; Signal-anchor for type II membrane protein segment. Topologically, residues 30-155 (LNENINLFYP…KTCKGISYDS (126 aa)) are periplasmic. The heme site is built by histidine 124 and tyrosine 128.

Belongs to the CcmE/CycJ family.

The protein localises to the cell inner membrane. In terms of biological role, heme chaperone required for the biogenesis of c-type cytochromes. Transiently binds heme delivered by CcmC and transfers the heme to apo-cytochromes in a process facilitated by CcmF and CcmH. The polypeptide is Cytochrome c-type biogenesis protein CcmE (Teredinibacter turnerae (strain ATCC 39867 / T7901)).